The chain runs to 528 residues: Cytochrome P450 1A5 (528 aa).

Cys467 contacts heme.

Belongs to the cytochrome P450 family. Heme is required as a cofactor.

The protein resides in the endoplasmic reticulum membrane. It is found in the microsome membrane. It carries out the reaction an organic molecule + reduced [NADPH--hemoprotein reductase] + O2 = an alcohol + oxidized [NADPH--hemoprotein reductase] + H2O + H(+). Cytochromes P450 are a group of heme-thiolate monooxygenases. In liver microsomes, this enzyme is involved in an NADPH-dependent electron transport pathway. It oxidizes a variety of structurally unrelated compounds, including steroids, fatty acids, and xenobiotics. The polypeptide is Cytochrome P450 1A5 (CYP1A5) (Gallus gallus (Chicken)).